Here is a 620-residue protein sequence, read N- to C-terminus: Glutathione-regulated potassium-efflux system protein KefC (620 aa).

Residues 1-3 are Periplasmic-facing; it reads MDS. The helical transmembrane segment at 4 to 24 threads the bilayer; it reads HTLVQALIYLGSAALIVPIAV. Arginine 25 is a topological domain (cytoplasmic). The helical transmembrane segment at 26–46 threads the bilayer; the sequence is LGLGSVLGYLIAGCIIGPWGL. The Periplasmic portion of the chain corresponds to 47–53; it reads RLVTDAE. The helical transmembrane segment at 54 to 74 threads the bilayer; it reads SILHFAEIGVVLMLFIIGLEL. Over 75–89 the chain is Cytoplasmic; it reads DPQRLWKLRAAVFGG. The helical transmembrane segment at 90–110 threads the bilayer; sequence GALQMVICGGLLGLFCMLLGL. Residues 111-113 are Periplasmic-facing; that stretch reads RWQ. The chain crosses the membrane as a helical span at residues 114–134; sequence VAELIGMTLALSSTAIAMQAM. Over 135–148 the chain is Cytoplasmic; sequence NERNLMVTQMGRSA. A helical transmembrane segment spans residues 149-169; the sequence is FAVLLFQDIAAIPLVAMIPLL. Residues 170 to 177 are Periplasmic-facing; the sequence is AASSASTT. Residues 178–198 form a helical membrane-spanning segment; it reads MGAFALSALKVAGALVLVVLL. Residues 199–213 lie on the Cytoplasmic side of the membrane; the sequence is GRYVTRPALRFVARS. A helical transmembrane segment spans residues 214–233; the sequence is GLREVFSAVALFLVFGFGLL. The Periplasmic segment spans residues 234–236; the sequence is LEE. The helical transmembrane segment at 237–254 threads the bilayer; it reads VGLSMAMGAFLAGVLLAS. The Cytoplasmic portion of the chain corresponds to 255-269; the sequence is SEYRHALESDIEPFK. Residues 270-290 form a helical membrane-spanning segment; that stretch reads GLLLGLFFIGVGMSIDFGTLI. The Periplasmic portion of the chain corresponds to 291-293; it reads ENP. Residues 294–314 traverse the membrane as a helical segment; sequence LRIVILLLGFLIIKIAMLWLI. Topologically, residues 315–326 are cytoplasmic; that stretch reads ARPLQVPNKQRR. The chain crosses the membrane as a helical span at residues 327–347; that stretch reads WFAVLLGQGSEFAFVVFGAAQ. Residues 348-358 are Periplasmic-facing; it reads MANVLEPEWAK. The chain crosses the membrane as a helical span at residues 359 to 379; the sequence is SLTLAVALSMAATPILLVILN. Residues 380 to 620 are Cytoplasmic-facing; it reads RLEQSSTEEA…ADEPETKPSS (241 aa). The 120-residue stretch at 399–518 folds into the RCK N-terminal domain; it reads QPRVIIAGFG…AGVEKPERET (120 aa). The tract at residues 597 to 620 is disordered; sequence GWQGTEEGKHTGNMADEPETKPSS.

It belongs to the monovalent cation:proton antiporter 2 (CPA2) transporter (TC 2.A.37) family. KefC subfamily. In terms of assembly, homodimer. Interacts with the regulatory subunit KefF.

It is found in the cell inner membrane. In terms of biological role, pore-forming subunit of a potassium efflux system that confers protection against electrophiles. Catalyzes K(+)/H(+) antiport. This Shigella flexneri protein is Glutathione-regulated potassium-efflux system protein KefC.